Here is a 73-residue protein sequence, read N- to C-terminus: Protein DSS1 HOMOLOG ON CHROMOSOME V (73 aa).

The protein belongs to the DSS1/SEM1 family. Part of the 26S proteasome. Interacts with BRCA2B. Interacts with EER5. Interacts with UCH1 and UCH2.

In terms of biological role, subunit of the 26S proteasome which plays a role in ubiquitin-dependent proteolysis. Also associates with the TREX-2 complex that is required for transcription-coupled mRNA export. In Arabidopsis thaliana (Mouse-ear cress), this protein is Protein DSS1 HOMOLOG ON CHROMOSOME V.